The primary structure comprises 302 residues: NAD kinase 2 (302 aa).

Catalysis depends on aspartate 78, which acts as the Proton acceptor. Residues aspartate 78 to glycine 79, asparagine 152 to glutamate 153, aspartate 182, and threonine 193 to serine 198 contribute to the NAD(+) site.

Belongs to the NAD kinase family. The cofactor is a divalent metal cation.

It localises to the cytoplasm. The catalysed reaction is NAD(+) + ATP = ADP + NADP(+) + H(+). In terms of biological role, involved in the regulation of the intracellular balance of NAD and NADP, and is a key enzyme in the biosynthesis of NADP. Catalyzes specifically the phosphorylation on 2'-hydroxyl of the adenosine moiety of NAD to yield NADP. The polypeptide is NAD kinase 2 (Prochlorococcus marinus (strain NATL2A)).